Here is a 162-residue protein sequence, read N- to C-terminus: Nucleotide-binding protein Mpe_A3039 (162 aa).

The protein belongs to the YajQ family.

In terms of biological role, nucleotide-binding protein. This is Nucleotide-binding protein Mpe_A3039 from Methylibium petroleiphilum (strain ATCC BAA-1232 / LMG 22953 / PM1).